A 447-amino-acid chain; its full sequence is Phosphoglucosamine mutase (447 aa).

Serine 107 functions as the Phosphoserine intermediate in the catalytic mechanism. Positions 107, 246, 248, and 250 each coordinate Mg(2+). Serine 107 is subject to Phosphoserine.

This sequence belongs to the phosphohexose mutase family. Mg(2+) serves as cofactor. Post-translationally, activated by phosphorylation.

It carries out the reaction alpha-D-glucosamine 1-phosphate = D-glucosamine 6-phosphate. Catalyzes the conversion of glucosamine-6-phosphate to glucosamine-1-phosphate. In Ralstonia nicotianae (strain ATCC BAA-1114 / GMI1000) (Ralstonia solanacearum), this protein is Phosphoglucosamine mutase.